The chain runs to 99 residues: Malonate decarboxylase acyl carrier protein (99 aa).

At serine 25 the chain carries O-(phosphoribosyl dephospho-coenzyme A)serine.

Post-translationally, covalently binds the prosthetic group of malonate decarboxylase.

It localises to the cytoplasm. Its function is as follows. Subunit of malonate decarboxylase, it is an acyl carrier protein to which acetyl and malonyl thioester residues are bound via a 2'-(5''-phosphoribosyl)-3'-dephospho-CoA prosthetic group and turn over during the catalytic mechanism. The polypeptide is Malonate decarboxylase acyl carrier protein (mdcC) (Klebsiella pneumoniae).